The sequence spans 97 residues: MEARDVILRPVVTESSMADLDDKRYTFDVNVQATKTQVKKAIEEIFDVKVVKVNVMNVKGKLKRQGRYAGYTKKRRKAIVTLSSDSNEIKLFNDDQQ.

This sequence belongs to the universal ribosomal protein uL23 family. Part of the 50S ribosomal subunit. Contacts protein L29, and trigger factor when it is bound to the ribosome.

Its function is as follows. One of the early assembly proteins it binds 23S rRNA. One of the proteins that surrounds the polypeptide exit tunnel on the outside of the ribosome. Forms the main docking site for trigger factor binding to the ribosome. The sequence is that of Large ribosomal subunit protein uL23 from Lactiplantibacillus plantarum (strain ATCC BAA-793 / NCIMB 8826 / WCFS1) (Lactobacillus plantarum).